The following is a 761-amino-acid chain: Semaphorin-4A (761 aa).

Residues 1 to 32 (MALPALGLDPWSLLGLFLFQLLQLLLPTTTAG) form the signal peptide. Topologically, residues 33 to 683 (GGGQGPMPRV…LAAQQSYWPH (651 aa)) are extracellular. In terms of domain architecture, Sema spans 36–494 (QGPMPRVRYY…FSGGVWRVPR (459 aa)). Cysteines 113 and 124 form a disulfide. 2 N-linked (GlcNAc...) asparagine glycosylation sites follow: N120 and N135. 3 cysteine pairs are disulfide-bonded: C142–C151, C269–C379, and C293–C339. A glycan (N-linked (GlcNAc...) asparagine) is linked at N496. One can recognise a PSI domain in the interval 496–548 (NCSVYESCVDCVLARDPHCAWDPESRTCCLLSAPNLNSWKQDMERGNPEWACA). 3 disulfide bridges follow: C497–C514, C506–C523, and C580–C624. The 59-residue stretch at 573 to 631 (NSILELPCPHLSALASYYWSHGPAAVPEASSTVYNGSLLLIVQDGVGGLYQCWATENGF) folds into the Ig-like C2-type domain. N-linked (GlcNAc...) asparagine glycosylation occurs at N607. The chain crosses the membrane as a helical span at residues 684 to 704 (FVTVTVLFALVLSGALIILVA). Over 705–761 (SPLRALRARGKVQGCETLRPGEKAPLSREQHLQSPKECRTSASDVDADNNCLGTEVA) the chain is Cytoplasmic. The tract at residues 722–749 (LRPGEKAPLSREQHLQSPKECRTSASDV) is disordered. The segment covering 723–743 (RPGEKAPLSREQHLQSPKECR) has biased composition (basic and acidic residues).

It belongs to the semaphorin family. Interacts with PLXNB1, PLXNB2, PLXNB3, PLXND1 and TIMD2.

It is found in the cell membrane. Functionally, cell surface receptor for PLXNB1, PLXNB2, PLXNB3 and PLXND1 that plays an important role in cell-cell signaling. Regulates glutamatergic and GABAergic synapse development. Promotes the development of inhibitory synapses in a PLXNB1-dependent manner and promotes the development of excitatory synapses in a PLXNB2-dependent manner. Plays a role in priming antigen-specific T-cells, promotes differentiation of Th1 T-helper cells, and thereby contributes to adaptive immunity. Promotes phosphorylation of TIMD2. Inhibits angiogenesis. Promotes axon growth cone collapse. Inhibits axonal extension by providing local signals to specify territories inaccessible for growing axons. This chain is Semaphorin-4A (SEMA4A), found in Homo sapiens (Human).